We begin with the raw amino-acid sequence, 245 residues long: 1-(5-phosphoribosyl)-5-[(5-phosphoribosylamino)methylideneamino] imidazole-4-carboxamide isomerase (245 aa).

Residue Asp-7 is the Proton acceptor of the active site. Asp-129 acts as the Proton donor in catalysis.

It belongs to the HisA/HisF family.

It is found in the cytoplasm. The enzyme catalyses 1-(5-phospho-beta-D-ribosyl)-5-[(5-phospho-beta-D-ribosylamino)methylideneamino]imidazole-4-carboxamide = 5-[(5-phospho-1-deoxy-D-ribulos-1-ylimino)methylamino]-1-(5-phospho-beta-D-ribosyl)imidazole-4-carboxamide. Its pathway is amino-acid biosynthesis; L-histidine biosynthesis; L-histidine from 5-phospho-alpha-D-ribose 1-diphosphate: step 4/9. The polypeptide is 1-(5-phosphoribosyl)-5-[(5-phosphoribosylamino)methylideneamino] imidazole-4-carboxamide isomerase (Shewanella sp. (strain ANA-3)).